Consider the following 261-residue polypeptide: 3-hydroxyacyl-CoA dehydrogenase type-2 (261 aa).

A2 carries the post-translational modification N-acetylalanine. Residues S20, L22, and D41 each coordinate NAD(+). Position 53 is an N6-acetyllysine; alternate (K53). Residue K53 is modified to N6-succinyllysine; alternate. NAD(+) contacts are provided by D64 and V65. Position 69 is an N6-acetyllysine (K69). Residue C91 coordinates NAD(+). N6-acetyllysine is present on residues K99 and K105. S155 is a substrate binding site. NAD(+) contacts are provided by Y168, K172, F201, and T203. Y168 serves as the catalytic Proton acceptor. Residue K212 is modified to N6-acetyllysine; alternate. An N6-succinyllysine; alternate modification is found at K212.

This sequence belongs to the short-chain dehydrogenases/reductases (SDR) family. In terms of assembly, homotetramer. Component of mitochondrial ribonuclease P, a complex composed of TRMT10C/MRPP1, HSD17B10/MRPP2 and PRORP/MRPP3. Interacts with TRMT10C/MRPP1; forming the MRPP1-MRPP2 subcomplex of the mitochondrial ribonuclease P complex.

The protein localises to the mitochondrion. Its subcellular location is the mitochondrion matrix. The protein resides in the mitochondrion nucleoid. It catalyses the reaction a (3S)-3-hydroxyacyl-CoA + NAD(+) = a 3-oxoacyl-CoA + NADH + H(+). The catalysed reaction is (2S,3S)-3-hydroxy-2-methylbutanoyl-CoA + NAD(+) = 2-methyl-3-oxobutanoyl-CoA + NADH + H(+). It carries out the reaction testosterone + NAD(+) = androst-4-ene-3,17-dione + NADH + H(+). The enzyme catalyses 5alpha-androstane-3alpha,17beta-diol + NAD(+) = 17beta-hydroxy-5alpha-androstan-3-one + NADH + H(+). It catalyses the reaction 17beta-estradiol + NAD(+) = estrone + NADH + H(+). The catalysed reaction is cholate + NAD(+) = 3alpha,12alpha-dihydroxy-7-oxo-5beta-cholanate + NADH + H(+). It carries out the reaction (3S)-3-hydroxybutanoyl-CoA + NAD(+) = acetoacetyl-CoA + NADH + H(+). The enzyme catalyses (3S)-hydroxyoctanoyl-CoA + NAD(+) = 3-oxooctanoyl-CoA + NADH + H(+). It catalyses the reaction (3S)-hydroxyhexadecanoyl-CoA + NAD(+) = 3-oxohexadecanoyl-CoA + NADH + H(+). The catalysed reaction is 17beta-hydroxy-5alpha-androstan-3-one + NAD(+) = 5alpha-androstan-3,17-dione + NADH + H(+). It carries out the reaction 5alpha-pregnan-20beta-ol-3-one + NAD(+) = 5alpha-pregnane-3,20-dione + NADH + H(+). The enzyme catalyses 3alpha-hydroxy-5alpha-pregnan-20-one + NAD(+) = 5alpha-pregnane-3,20-dione + NADH + H(+). It catalyses the reaction cortisone + NAD(+) = 17alpha-hydroxypregn-4-en-3,11,20-trione-21-al + NADH + H(+). The catalysed reaction is 11-dehydrocorticosterone + NAD(+) = pregn-4-ene-3,11,20,21-tetraone + NADH + H(+). It carries out the reaction cortisol + NAD(+) = 11beta,17alpha-dihydroxypregn-4-ene-3,20,21-trione + NADH + H(+). The enzyme catalyses chenodeoxycholate + NAD(+) = 7-oxolithocholate + NADH + H(+). It catalyses the reaction ursodeoxycholate + NAD(+) = 7-oxolithocholate + NADH + H(+). The catalysed reaction is 3beta,7beta-dihydroxy-5beta-cholan-24-oate + NAD(+) = 3beta-hydroxy-7-oxo-5beta-cholan-24-oate + NADH + H(+). Its pathway is amino-acid degradation; L-isoleucine degradation. The protein operates within lipid metabolism; fatty acid beta-oxidation. It functions in the pathway steroid metabolism. It participates in lipid metabolism; bile acid biosynthesis. Its function is as follows. Mitochondrial dehydrogenase involved in pathways of fatty acid, branched-chain amino acid and steroid metabolism. Acts as (S)-3-hydroxyacyl-CoA dehydrogenase in mitochondrial fatty acid beta-oxidation, a major degradation pathway of fatty acids. Catalyzes the third step in the beta-oxidation cycle, namely the reversible conversion of (S)-3-hydroxyacyl-CoA to 3-ketoacyl-CoA. Preferentially accepts straight medium- and short-chain acyl-CoA substrates with highest efficiency for (3S)-hydroxybutanoyl-CoA. Acts as 3-hydroxy-2-methylbutyryl-CoA dehydrogenase in branched-chain amino acid catabolic pathway. Catalyzes the oxidation of 3-hydroxy-2-methylbutanoyl-CoA into 2-methyl-3-oxobutanoyl-CoA, a step in isoleucine degradation pathway. Has hydroxysteroid dehydrogenase activity toward steroid hormones and bile acids. Catalyzes the oxidation of 3alpha-, 17beta-, 20beta- and 21-hydroxysteroids and 7alpha- and 7beta-hydroxy bile acids. Oxidizes allopregnanolone/brexanolone at the 3alpha-hydroxyl group, which is known to be critical for the activation of gamma-aminobutyric acid receptors (GABAARs) chloride channel. Has phospholipase C-like activity toward cardiolipin and its oxidized species. Likely oxidizes the 2'-hydroxyl in the head group of cardiolipin to form a ketone intermediate that undergoes nucleophilic attack by water and fragments into diacylglycerol, dihydroxyacetone and orthophosphate. Has higher affinity for cardiolipin with oxidized fatty acids and may degrade these species during the oxidative stress response to protect cells from apoptosis. By interacting with intracellular amyloid-beta, it may contribute to the neuronal dysfunction associated with Alzheimer disease (AD). Essential for structural and functional integrity of mitochondria. In terms of biological role, in addition to mitochondrial dehydrogenase activity, moonlights as a component of mitochondrial ribonuclease P, a complex that cleaves tRNA molecules in their 5'-ends. Together with TRMT10C/MRPP1, forms a subcomplex of the mitochondrial ribonuclease P, named MRPP1-MRPP2 subcomplex, which displays functions that are independent of the ribonuclease P activity. The MRPP1-MRPP2 subcomplex catalyzes the formation of N(1)-methylguanine and N(1)-methyladenine at position 9 (m1G9 and m1A9, respectively) in tRNAs; HSD17B10/MRPP2 acting as a non-catalytic subunit. The MRPP1-MRPP2 subcomplex also acts as a tRNA maturation platform: following 5'-end cleavage by the mitochondrial ribonuclease P complex, the MRPP1-MRPP2 subcomplex enhances the efficiency of 3'-processing catalyzed by ELAC2, retains the tRNA product after ELAC2 processing and presents the nascent tRNA to the mitochondrial CCA tRNA nucleotidyltransferase TRNT1 enzyme. Associates with mitochondrial DNA complexes at the nucleoids to initiate RNA processing and ribosome assembly. This Bos taurus (Bovine) protein is 3-hydroxyacyl-CoA dehydrogenase type-2 (HSD17B10).